Consider the following 208-residue polypeptide: Orotidine 5'-phosphate decarboxylase (208 aa).

Residues aspartate 7, lysine 29, 57 to 66 (DLKLADIPNT), serine 109, 162 to 172 (PGIGAQGGKAK), glycine 185, and arginine 186 each bind substrate. The active-site Proton donor is the lysine 59.

Belongs to the OMP decarboxylase family. Type 1 subfamily. Homodimer.

The catalysed reaction is orotidine 5'-phosphate + H(+) = UMP + CO2. The protein operates within pyrimidine metabolism; UMP biosynthesis via de novo pathway; UMP from orotate: step 2/2. Functionally, catalyzes the decarboxylation of orotidine 5'-monophosphate (OMP) to uridine 5'-monophosphate (UMP). The sequence is that of Orotidine 5'-phosphate decarboxylase from Pyrococcus abyssi (strain GE5 / Orsay).